We begin with the raw amino-acid sequence, 150 residues long: Large ribosomal subunit protein bL9 (150 aa).

Belongs to the bacterial ribosomal protein bL9 family.

Its function is as follows. Binds to the 23S rRNA. This Streptococcus sanguinis (strain SK36) protein is Large ribosomal subunit protein bL9.